Reading from the N-terminus, the 644-residue chain is Chaperone protein DnaK (644 aa).

Thr-199 carries the post-translational modification Phosphothreonine; by autocatalysis. The segment at 603–644 (YAKKSSEGQAAQGQTQSQESTKPAEEGVVDAEFEEVKEEDKK) is disordered. Positions 609–623 (EGQAAQGQTQSQEST) are enriched in polar residues. A compositionally biased stretch (acidic residues) spans 629–644 (GVVDAEFEEVKEEDKK).

Belongs to the heat shock protein 70 family.

In terms of biological role, acts as a chaperone. This is Chaperone protein DnaK from Legionella pneumophila (strain Corby).